The following is a 215-amino-acid chain: MSKIYDWFEERLEIQAIADDITSKYVPPHVNIFYCFGGITLTCFLIQVATGFAMTFYYRPTVTEAFASVEYIMTNVNFGWLIRSIHRWSASMMVMMLILHVFRVYLTGGFKKPRELTWVTGVILAVITVSFGVTGYSLPWDQVGYWAVKIVTGVPDAIPVIGAPLVELLRGSVSVGQSTLTRFYSLHTFVLPLLTAVFMLMHFLMIRKQGISGPL.

Residues 32 to 52 (IFYCFGGITLTCFLIQVATGF) form a helical membrane-spanning segment. Residue cysteine 35 participates in heme c binding. Heme b is bound by residues histidine 86 and histidine 100. The next 3 membrane-spanning stretches (helical) occupy residues 90-110 (ASMMVMMLILHVFRVYLTGGF), 116-136 (LTWVTGVILAVITVSFGVTGY), and 186-206 (LHTFVLPLLTAVFMLMHFLMI). Heme b is bound by residues histidine 187 and histidine 202.

The protein belongs to the cytochrome b family. PetB subfamily. The 4 large subunits of the cytochrome b6-f complex are cytochrome b6, subunit IV (17 kDa polypeptide, PetD), cytochrome f and the Rieske protein, while the 4 small subunits are PetG, PetL, PetM and PetN. The complex functions as a dimer. Heme b is required as a cofactor. Heme c serves as cofactor.

Its subcellular location is the plastid. The protein localises to the chloroplast thylakoid membrane. In terms of biological role, component of the cytochrome b6-f complex, which mediates electron transfer between photosystem II (PSII) and photosystem I (PSI), cyclic electron flow around PSI, and state transitions. In Nephroselmis olivacea (Green alga), this protein is Cytochrome b6.